The chain runs to 487 residues: L-tartrate/succinate antiporter (487 aa).

Residues 1–9 are Periplasmic-facing; it reads MKPSTEWWR. The chain crosses the membrane as a helical span at residues 10 to 30; sequence YLAPLAVIAIIALLPVPAGLE. Residues 31–32 lie on the Cytoplasmic side of the membrane; sequence NH. Transmembrane regions (helical) follow at residues 33–53 and 54–74; these read TWLY…EPVP and GAVV…WLLF. The Cytoplasmic segment spans residues 75–92; the sequence is SPEQLAQPGFKFTAKSLS. A helical membrane pass occupies residues 93-113; it reads WAVSGFSNSVIWLIFAAFMFG. Residues 114-136 lie on the Periplasmic side of the membrane; sequence TGYEKTGLGRRIALILVKKMGHR. Residues 137–157 traverse the membrane as a helical segment; sequence TLFLGYAVMFSELILAPVTPS. The Cytoplasmic portion of the chain corresponds to 158–188; the sequence is NSARGAGIIYPIIRNLPPLYQSQPNDSSSRS. A helical transmembrane segment spans residues 189-209; the sequence is IGSYIMWMGIVADCVTSAIFL. The Periplasmic portion of the chain corresponds to 210 to 235; that stretch reads TAMAPNLLLIGLMKSASHATLSWGDW. Residues 236 to 256 form a helical membrane-spanning segment; sequence FLGMLPLSILLVLLVPWLAYV. The Cytoplasmic segment spans residues 257-291; sequence LYPPVLKSGDQVPRWAETELQAMGPLCSREKRMLG. 2 helical membrane passes run 292–312 and 313–333; these read LMVG…AAMV and GYSV…DIVS. Residues 334-339 lie on the Cytoplasmic side of the membrane; that stretch reads NKAAWN. A helical transmembrane segment spans residues 340 to 360; sequence VFFWLASLITLATGLNNTGFI. The Periplasmic segment spans residues 361-369; that stretch reads SWFGKLLAG. The helical transmembrane segment at 370–390 threads the bilayer; that stretch reads SLSGYSPTMVMVALIVVFYLL. At 391 to 392 the chain is on the cytoplasmic side; sequence RY. A helical transmembrane segment spans residues 393-413; that stretch reads FFASATAYTSALAPMMIAAAL. At 414–417 the chain is on the periplasmic side; the sequence is AMPE. A helical membrane pass occupies residues 418 to 438; sequence IPLPVFCLMVGAAIGLGSILT. At 439 to 464 the chain is on the cytoplasmic side; the sequence is PYATGPSPIYYGSGYLPTADYWRLGA. A helical membrane pass occupies residues 465–485; that stretch reads IFGLIFLVLLVITGLLWMPVV. Topologically, residues 486 to 487 are periplasmic; sequence LL.

This sequence belongs to the SLC13A/DASS transporter (TC 2.A.47) family. DIT1 subfamily.

The protein localises to the cell inner membrane. The enzyme catalyses (2R,3R)-tartrate(out) + succinate(in) = (2R,3R)-tartrate(in) + succinate(out). Catalyzes the uptake of tartrate in exchange for intracellular succinate. Essential for anaerobic L-tartrate fermentation. This Escherichia coli (strain K12) protein is L-tartrate/succinate antiporter.